We begin with the raw amino-acid sequence, 968 residues long: 5'-3' exoribonuclease 2 (968 aa).

Coiled-coil stretches lie at residues 113 to 140 (RFRA…RGEI) and 387 to 416 (KNKH…LKRV). A compositionally biased stretch (low complexity) spans 498–510 (TDSSANSETTTSE). Disordered regions lie at residues 498 to 538 (TDSS…QSDD) and 873 to 968 (LTNG…RPQR). A compositionally biased stretch (basic and acidic residues) spans 521–538 (SLKRKLEPEEDKQTQSDD). The segment covering 882–893 (QSQNSQYLSYGQ) has biased composition (polar residues). Residues 902–959 (SYNQQGYYNQQGRYNQQGNNYNQQGRYSQQSQYNQYRSNTQRFNNNQNYNQSSNNSRS) show a composition bias toward low complexity.

Belongs to the 5'-3' exonuclease family. XRN2/RAT1 subfamily. In terms of assembly, interacts with RAI1; the interaction is direct, stabilizes RAT1 protein structure and may stimulate its exoribonuclease activity. The interaction also stimulates RAI1 pyrophosphohydrolase activity, probably by recruiting it to mRNA substrates.

Its subcellular location is the nucleus. Its function is as follows. Possesses 5'-&gt;3' exoribonuclease activity. Required for the processing of nuclear mRNA and rRNA precursors. May promote the termination of transcription by RNA polymerase II. Essential for vegetative cell growth and chromosome segregation. This chain is 5'-3' exoribonuclease 2 (RAT1), found in Candida albicans (strain SC5314 / ATCC MYA-2876) (Yeast).